Reading from the N-terminus, the 1758-residue chain is Y' element ATP-dependent helicase YIL177C (1758 aa).

Positions 668–845 constitute a Helicase ATP-binding domain; sequence EIYMADTPSV…LQRIGLTGLA (178 aa). Position 681 to 688 (681 to 688) interacts with ATP; sequence APPGYGKT. Residues 900-1051 enclose the Helicase C-terminal domain; the sequence is ALKLLLALFE…EFYGLESKKG (152 aa). Low complexity predominate over residues 1142 to 1360; the sequence is NVRTNATTNA…ATTTESTNAS (219 aa). Residues 1142-1384 form a disordered region; the sequence is NVRTNATTNA…RFHPVTDINK (243 aa). Basic and acidic residues predominate over residues 1361-1384; sequence AKEDANKDGNAEDNRFHPVTDINK.

Belongs to the helicase family. Yeast subtelomeric Y' repeat subfamily.

In terms of biological role, catalyzes DNA unwinding and is involved in telomerase-independent telomere maintenance. The polypeptide is Y' element ATP-dependent helicase YIL177C (Saccharomyces cerevisiae (strain ATCC 204508 / S288c) (Baker's yeast)).